A 296-amino-acid polypeptide reads, in one-letter code: Biliverdin reductase A (296 aa).

The propeptide occupies 1–2 (MN). NADP(+) contacts are provided by residues 16 to 19 (VGRA), 44 to 46 (SRR), 77 to 80 (SSSH), and tyrosine 98. Residue threonine 174 is modified to Phosphothreonine. Phosphoserine occurs at positions 178 and 230. N6-acetyllysine occurs at positions 248 and 253. Zn(2+)-binding residues include histidine 280, cysteine 281, cysteine 292, and cysteine 293.

This sequence belongs to the Gfo/Idh/MocA family. Biliverdin reductase subfamily. Monomer. Zn(2+) is required as a cofactor. As to expression, liver.

The protein localises to the cytoplasm. It is found in the cytosol. It carries out the reaction (4Z,15Z)-bilirubin IXalpha + NAD(+) = biliverdin IXalpha + NADH + H(+). It catalyses the reaction (4Z,15Z)-bilirubin IXalpha + NADP(+) = biliverdin IXalpha + NADPH + H(+). It functions in the pathway porphyrin-containing compound metabolism; protoheme degradation. Functionally, reduces the gamma-methene bridge of the open tetrapyrrole, biliverdin IXalpha, to bilirubin with the concomitant oxidation of a NADH or NADPH cofactor. Does not reduce bilirubin IXbeta. Uses the reactants NADH or NADPH depending on the pH; NADH is used at the acidic pH range (6-6.9) and NADPH at the alkaline range (8.5-8.7). NADPH, however, is the probable reactant in biological systems. This Homo sapiens (Human) protein is Biliverdin reductase A.